The primary structure comprises 139 residues: uncharacterized protein (139 aa).

2 helical membrane passes run 35-55 (AYFKVFSFFFFLLLTLGAAAA) and 119-139 (CCLFCCSSSYCLAGVLCVFCV).

Its subcellular location is the membrane. This is an uncharacterized protein from Saccharomyces cerevisiae (strain ATCC 204508 / S288c) (Baker's yeast).